Consider the following 1450-residue polypeptide: MYSNPNNFFGGNAMGPGAPQYGAGQPQQQQQQQQQPDPFAPQPTGFAQAPLQQQYTGYPGLQAPQGQLQPQFTGYGQTPQQGMATGAPPMPAIPQQYQQQFQQQQTQQQQPQQQQMPFAAAPPQPTQTLAPPPPVKPQATGFSEMAASFHAGGGARSQPSAAPRKANTVPNIRLSFITAPDQAKFETLFKSAVGDGQTTMSGEKARDLLLRSRLDGDSLSHIWTLADTTRSGQLHFPEFALAMYLCNLKLTGKSLPPSLPDNIKNEVSSMVDIINFSIAEESGSASATSTNAPDFGVRQNTATPPVIQHPQPQPSSSQLLQAQMTGFPAQQTGFMGQGLQPQQTGMPQATGYTGPRPPMPPMPTGFGSNLSPNVGPGGMIAPLNAQPTGRPGQWGLVNTPATGLPNIDALQARMMPQQGREQQDYTTAGLQGNAVIPWAITKDEKTRYDALFRAWDGLNKGYIGGDQAIEIFGQSGLEKPDLERAWTLADHGNKGRLDLDEFAVAMHLIYRKLNGYPIPNQLPPELVPPSTRNFNESLGTIKNMLHKESDFRKNSGASLLPQKTGVSYLKNHSFRGTGGASGNRKDATVFKNNDDAVGYRSSARRRVGNASPRPESPASVGSNEELSLDQLRKKIKEKQVLLDAMDFADEKNMEEDDILDRRDRREAEELYRRIRRIQEDIDNHPDASPIGGDSEAERRALKRQLQNLTDKIPELASQVRKTEKAIADARLELFRLKDAKAHPGSAAAIVGTGPGGAITESDRLKARAKAMMQQRTAALTGKKIDVTSDQDAEKRLEEESIKARTEKENNERMVRDVEDSVRDFAKGIEDNLKEGGQDSTTEHEKRRWEDALGVEDEVRDFIYDLQRSSRASRIRSQDRQGGRKATQEPVSAEAPPTARVDSPASISRTASPAAPPAAGGSYSSYKTPEERAAFIKQQAEQRMAERLAALGIKAPTKPGETAAQRAEREQAERAAKLRQAEEEDARRETERQARLAEEQGVPPPAVSQAAKPEGKKPPPPPSRKAAKPDDRRAEEELATKKAEEERLERERGEQERATRELESQAKAQEDELAKEREEADARLRALEEQVRQGKLKKEEEKRKKKAALAEAKEKEAQLAQRRAEIEAARKREEELRRQLEAMDDDSSSDDEGPEQITPQASTPTMNDSHIVNREPERQPTPPPAPVVSPPQIVTSSPPTEGESRNPYFRMMSHSSDASPATAPAPPVAPPVAPPAPPQPEASTNPFHRIAQAPAPETSPVPVTRRRPDDDGWGSDKDEEDEESDDDRPGGKSAAALASILFGTMAPPRPLSATGDKSATSPTVSSPVAPPPESASPPAASPSAPPPPPPMPGSFPSASPGPGAPPPPPPPPPPMPSAGGPPGAPPAPPPPPPGMAPPAPPPPPPAGGPPAAAPAGGRPAGLLGQIQAGKALKKTTTRDKSAAAVAGRVLD.

Residues 1-140 (MYSNPNNFFG…PPPPVKPQAT (140 aa)) form a disordered region. 2 stretches are compositionally biased toward low complexity: residues 15–37 (GPGA…QQPD) and 59–71 (PGLQ…LQPQ). The span at 72–83 (FTGYGQTPQQGM) shows a compositional bias: polar residues. A compositionally biased stretch (low complexity) spans 93–119 (IPQQYQQQFQQQQTQQQQPQQQQMPFA). The segment covering 120-136 (AAPPQPTQTLAPPPPVK) has biased composition (pro residues). EH domains follow at residues 181–270 (DQAK…VSSM) and 444–533 (EKTR…STRN). 2 consecutive EF-hand domains span residues 214–249 (LDGD…CNLK) and 477–512 (LEKP…IYRK). Disordered stretches follow at residues 600–625 (RSSA…SNEE), 788–851 (SDQD…WEDA), and 865–1450 (LQRS…RVLD). The stretch at 622 to 741 (SNEELSLDQL…ELFRLKDAKA (120 aa)) forms a coiled coil. Positions 788-850 (SDQDAEKRLE…TEHEKRRWED (63 aa)) are enriched in basic and acidic residues. Low complexity predominate over residues 902–924 (SPASISRTASPAAPPAAGGSYSS). The stretch at 960 to 1148 (ETAAQRAERE…LEAMDDDSSS (189 aa)) forms a coiled coil. Composition is skewed to basic and acidic residues over residues 965 to 997 (RAER…RLAE), 1026 to 1101 (AKPD…EEEK), and 1110 to 1140 (EAKE…RQLE). A compositionally biased stretch (acidic residues) spans 1141–1153 (AMDDDSSSDDEGP). The segment covering 1156-1169 (ITPQASTPTMNDSH) has biased composition (polar residues). Composition is skewed to pro residues over residues 1178 to 1188 (QPTPPPAPVVS) and 1222 to 1239 (APAP…PPQP). Residues 1265 to 1275 (RRPDDDGWGSD) show a composition bias toward basic and acidic residues. Acidic residues predominate over residues 1276–1285 (KDEEDEESDD). Residues 1314-1323 (GDKSATSPTV) show a composition bias toward polar residues. Composition is skewed to pro residues over residues 1327-1352 (VAPP…PMPG), 1361-1375 (PGAP…PPMP), and 1381-1411 (PGAP…PPAA). Residues 1417 to 1434 (RPAGLLGQIQAGKALKKT) form the WH2 domain.

This sequence belongs to the PAN1 family. In terms of assembly, component of the PAN1 actin cytoskeleton-regulatory complex.

The protein localises to the cell membrane. The protein resides in the endosome membrane. Its subcellular location is the cytoplasm. It is found in the cytoskeleton. It localises to the actin patch. Functionally, component of the PAN1 actin cytoskeleton-regulatory complex required for the internalization of endosomes during actin-coupled endocytosis. The complex links the site of endocytosis to the cell membrane-associated actin cytoskeleton. Mediates uptake of external molecules and vacuolar degradation of plasma membrane proteins. Plays a role in the proper organization of the cell membrane-associated actin cytoskeleton and promotes its destabilization. This chain is Actin cytoskeleton-regulatory complex protein PAN1 (PAN1), found in Chaetomium globosum (strain ATCC 6205 / CBS 148.51 / DSM 1962 / NBRC 6347 / NRRL 1970) (Soil fungus).